Here is a 368-residue protein sequence, read N- to C-terminus: Phosphate acyltransferase (368 aa).

Residues Leu-337 to Ala-368 are disordered.

It belongs to the PlsX family. In terms of assembly, homodimer. Probably interacts with PlsY.

Its subcellular location is the cytoplasm. The catalysed reaction is a fatty acyl-[ACP] + phosphate = an acyl phosphate + holo-[ACP]. It participates in lipid metabolism; phospholipid metabolism. Functionally, catalyzes the reversible formation of acyl-phosphate (acyl-PO(4)) from acyl-[acyl-carrier-protein] (acyl-ACP). This enzyme utilizes acyl-ACP as fatty acyl donor, but not acyl-CoA. This is Phosphate acyltransferase from Paraburkholderia phytofirmans (strain DSM 17436 / LMG 22146 / PsJN) (Burkholderia phytofirmans).